The primary structure comprises 384 residues: tRNA-specific 2-thiouridylase MnmA (384 aa).

Positions 1–26 are disordered; it reads MDEGIRASGGIRACQTGKQKQGRKRP. ATP contacts are provided by residues 36–43 and methionine 62; that span reads GMSGGVDS. An interaction with target base in tRNA region spans residues 122–124; the sequence is NPD. The active-site Nucleophile is cysteine 127. An intrachain disulfide couples cysteine 127 to cysteine 223. Residue glycine 151 coordinates ATP. The interaction with tRNA stretch occupies residues 173-175; sequence KDQ. Cysteine 223 (cysteine persulfide intermediate) is an active-site residue. Residues 334–335 form an interaction with tRNA region; the sequence is RY.

Belongs to the MnmA/TRMU family.

It localises to the cytoplasm. It carries out the reaction S-sulfanyl-L-cysteinyl-[protein] + uridine(34) in tRNA + AH2 + ATP = 2-thiouridine(34) in tRNA + L-cysteinyl-[protein] + A + AMP + diphosphate + H(+). Catalyzes the 2-thiolation of uridine at the wobble position (U34) of tRNA, leading to the formation of s(2)U34. The protein is tRNA-specific 2-thiouridylase MnmA of Chromobacterium violaceum (strain ATCC 12472 / DSM 30191 / JCM 1249 / CCUG 213 / NBRC 12614 / NCIMB 9131 / NCTC 9757 / MK).